Consider the following 248-residue polypeptide: UDP-2,3-diacylglucosamine hydrolase (248 aa).

Residues D7, H9, D40, N78, and H113 each contribute to the Mn(2+) site. 78–79 (NR) provides a ligand contact to substrate. Substrate is bound by residues D121, S159, T163, K166, and H194. 2 residues coordinate Mn(2+): H194 and H196.

It belongs to the LpxH family. It depends on Mn(2+) as a cofactor.

It is found in the cell inner membrane. The enzyme catalyses UDP-2-N,3-O-bis[(3R)-3-hydroxytetradecanoyl]-alpha-D-glucosamine + H2O = 2-N,3-O-bis[(3R)-3-hydroxytetradecanoyl]-alpha-D-glucosaminyl 1-phosphate + UMP + 2 H(+). The protein operates within glycolipid biosynthesis; lipid IV(A) biosynthesis; lipid IV(A) from (3R)-3-hydroxytetradecanoyl-[acyl-carrier-protein] and UDP-N-acetyl-alpha-D-glucosamine: step 4/6. In terms of biological role, hydrolyzes the pyrophosphate bond of UDP-2,3-diacylglucosamine to yield 2,3-diacylglucosamine 1-phosphate (lipid X) and UMP by catalyzing the attack of water at the alpha-P atom. Involved in the biosynthesis of lipid A, a phosphorylated glycolipid that anchors the lipopolysaccharide to the outer membrane of the cell. This chain is UDP-2,3-diacylglucosamine hydrolase, found in Pseudomonas syringae pv. syringae (strain B728a).